A 232-amino-acid polypeptide reads, in one-letter code: Ribonuclease P protein component 3 (232 aa).

It belongs to the eukaryotic/archaeal RNase P protein component 3 family. Consists of a catalytic RNA component and at least 4-5 protein subunits.

Its subcellular location is the cytoplasm. The catalysed reaction is Endonucleolytic cleavage of RNA, removing 5'-extranucleotides from tRNA precursor.. Its function is as follows. Part of ribonuclease P, a protein complex that generates mature tRNA molecules by cleaving their 5'-ends. The polypeptide is Ribonuclease P protein component 3 (Methanococcus maripaludis (strain C7 / ATCC BAA-1331)).